Reading from the N-terminus, the 558-residue chain is MARVEL domain-containing protein 2 (558 aa).

A compositionally biased stretch (basic and acidic residues) spans 1-16; that stretch reads MSNDGRSRNRDRRYDE. 2 disordered regions span residues 1–58 and 115–145; these read MSND…PPFG and CSPP…GTFS. Over 1 to 194 the chain is Cytoplasmic; the sequence is MSNDGRSRNR…YMKSWAGLLR (194 aa). Over residues 45–58 the composition is skewed to pro residues; sequence PLPPPPLPLQPPFG. Phosphoserine is present on residues serine 116, serine 120, and serine 161. Position 166 is a phosphothreonine (threonine 166). Residues 188–367 form the MARVEL domain; the sequence is SWAGLLRILG…SALVCLKLWR (180 aa). A helical membrane pass occupies residues 195–215; it reads ILGVVELLLGAGVFACVTAYI. At 216–223 the chain is on the extracellular side; sequence HKDSEWYN. The chain crosses the membrane as a helical span at residues 224–244; sequence LFGYSQPYGMGGVGGLGSMYG. At 245-254 the chain is on the cytoplasmic side; that stretch reads GYYYTGPKTP. The helical transmembrane segment at 255-275 threads the bilayer; it reads FVLVVAGLAWITTIIILVLGM. Residues 276–291 are Extracellular-facing; it reads SMYYRTILLDSNWWPL. The chain crosses the membrane as a helical span at residues 292-312; that stretch reads TEFGINVALFILYMAAAIVYV. The Cytoplasmic segment spans residues 313–319; the sequence is NDTNRGG. The helical transmembrane segment at 320–337 threads the bilayer; it reads LCYYPLFNTPVNAVFCRV. Over 338-341 the chain is Extracellular; the sequence is EGGQ. The chain crosses the membrane as a helical span at residues 342 to 362; the sequence is IAAMIFLFVTMIVYLISALVC. Over 363–558 the chain is Cytoplasmic; it reads LKLWRHEAAR…VMNWDVQGYS (196 aa). Phosphoserine is present on serine 387. Residue lysine 412 forms a Glycyl lysine isopeptide (Lys-Gly) (interchain with G-Cter in ubiquitin) linkage. Residues 439–548 adopt a coiled-coil conformation; that stretch reads MPDYVAKYPV…IKQRIQEYDK (110 aa). In terms of domain architecture, OCEL spans 440–551; the sequence is PDYVAKYPVI…RIQEYDKVMN (112 aa).

The protein belongs to the ELL/occludin family. In terms of assembly, interacts with TJP1. Interacts with the ubiquitin ligase ITCH. Interacts (via C-terminal cytoplasmic domain) with LSR (via the cytoplasmic domain), ILDR1 and ILDR2; the interaction is required to recruit MARVELD2 to tricellular contacts. Post-translationally, ubiquitinated by ITCH; but this ubiquitination does not lead to proteasomal degradation. Polyubiquitinated at Lys-412 via 'Lys-63'-linked ubiquitin chains; deubiquitinated by USP53. In terms of processing, phosphorylated.

It is found in the cell membrane. The protein resides in the cell junction. It localises to the tight junction. Plays a role in the formation of tricellular tight junctions and of epithelial barriers. Required for normal hearing via its role in the separation of the endolymphatic and perilymphatic spaces of the organ of Corti in the inner ear, and for normal survival of hair cells in the organ of Corti. The chain is MARVEL domain-containing protein 2 from Homo sapiens (Human).